Consider the following 189-residue polypeptide: GTP cyclohydrolase 1 (189 aa).

C78, H81, and C150 together coordinate Zn(2+).

The protein belongs to the GTP cyclohydrolase I family. As to quaternary structure, homomer.

The enzyme catalyses GTP + H2O = 7,8-dihydroneopterin 3'-triphosphate + formate + H(+). It functions in the pathway cofactor biosynthesis; 7,8-dihydroneopterin triphosphate biosynthesis; 7,8-dihydroneopterin triphosphate from GTP: step 1/1. The protein is GTP cyclohydrolase 1 of Lysinibacillus sphaericus (strain C3-41).